A 420-amino-acid chain; its full sequence is Protein-lysine 6-oxidase (420 aa).

A signal peptide spans 1 to 27 (MRCAPPGLLLAQLHACIFWSGLWPAGC). Residues 28 to 171 (QSPPAAWRQR…RPGREDVMVG (144 aa)) constitute a propeptide, removed by BMP1. The tract at residues 54–177 (AQYQPPRRRQ…VMVGDDPYSP (124 aa)) is disordered. The N-linked (GlcNAc...) asparagine glycan is linked to N78. The span at 82-92 (PRAAAAAAARP) shows a compositional bias: low complexity. Residues 93-105 (QPEPQPQAQPQPR) are compositionally biased toward pro residues. Basic residues-rich tracts occupy residues 107 to 119 (RSSR…RRHW) and 134 to 147 (APRR…SRRR). At Y190 the chain carries Sulfotyrosine. The segment at 216–420 (PDLVPDPYYI…YASGCTISPY (205 aa)) is lysyl-oxidase like. 5 disulfides stabilise this stretch: C241–C247, C294–C343, C327–C333, C354–C364, and C401–C415. H295, H297, and H299 together coordinate Cu cation. The lysine tyrosylquinone (Lys-Tyr) cross-link spans 323–358 (KASFCLEDTSCDYGYYRRYACTAHTQGLSPGCYDTY). The residue at position 358 (Y358) is a 2',4',5'-topaquinone.

The protein belongs to the lysyl oxidase family. Requires Cu cation as cofactor. It depends on lysine tyrosylquinone residue as a cofactor. The lysine tyrosylquinone cross-link (LTQ) is generated by condensation of the epsilon-amino group of a lysine with a topaquinone produced by oxidation of tyrosine. Post-translationally, proteolytically cleaved by BMP1 which removes the propeptide. Also proteolytically cleaved by ADAMTS2 and ADAMTS14, but not by ADAMTS3, at an additional cleavage site downstream of the BMP1 cleavage site. The propeptide plays a role in directing the deposition of this enzyme to elastic fibers, via interaction with tropoelastin. Cleavage by BMP1 to remove the propeptide does not increase enzymatic activity but increases binding to collagen. Cleavage by ADAMTS2 produces a form with reduced collagen-binding activity. In terms of processing, sulfated at Tyr-190 and also at either Tyr-186 or Tyr-187 which enhances binding to collagen.

The protein localises to the secreted. It is found in the extracellular space. It catalyses the reaction L-lysyl-[protein] + O2 + H2O = (S)-2-amino-6-oxohexanoyl-[protein] + H2O2 + NH4(+). In terms of biological role, responsible for the post-translational oxidative deamination of peptidyl lysine residues in precursors to fibrous collagen and elastin. Its function is as follows. In addition to cross linking of extracellular matrix proteins, it may have a direct role in tumor suppression. In Gallus gallus (Chicken), this protein is Protein-lysine 6-oxidase (LOX).